A 185-amino-acid chain; its full sequence is Pyridoxal 5'-phosphate synthase subunit PdxT (185 aa).

46-48 (GES) contributes to the L-glutamine binding site. The active-site Nucleophile is Cys75. L-glutamine-binding positions include Arg101 and 129-130 (IR). Residues His165 and Glu167 each act as charge relay system in the active site.

This sequence belongs to the glutaminase PdxT/SNO family. In terms of assembly, in the presence of PdxS, forms a dodecamer of heterodimers. Only shows activity in the heterodimer.

It catalyses the reaction aldehydo-D-ribose 5-phosphate + D-glyceraldehyde 3-phosphate + L-glutamine = pyridoxal 5'-phosphate + L-glutamate + phosphate + 3 H2O + H(+). It carries out the reaction L-glutamine + H2O = L-glutamate + NH4(+). It functions in the pathway cofactor biosynthesis; pyridoxal 5'-phosphate biosynthesis. Functionally, catalyzes the hydrolysis of glutamine to glutamate and ammonia as part of the biosynthesis of pyridoxal 5'-phosphate. The resulting ammonia molecule is channeled to the active site of PdxS. In Staphylococcus epidermidis (strain ATCC 12228 / FDA PCI 1200), this protein is Pyridoxal 5'-phosphate synthase subunit PdxT.